The chain runs to 233 residues: Lipoprotein-releasing system ATP-binding protein LolD (233 aa).

The 228-residue stretch at 6 to 233 folds into the ABC transporter domain; it reads LQCDNLCKRY…TAELSLMGAE (228 aa). 42–49 contacts ATP; sequence GSSGSGKS.

Belongs to the ABC transporter superfamily. Lipoprotein translocase (TC 3.A.1.125) family. The complex is composed of two ATP-binding proteins (LolD) and two transmembrane proteins (LolC and LolE).

It localises to the cell inner membrane. In terms of biological role, part of the ABC transporter complex LolCDE involved in the translocation of mature outer membrane-directed lipoproteins, from the inner membrane to the periplasmic chaperone, LolA. Responsible for the formation of the LolA-lipoprotein complex in an ATP-dependent manner. The sequence is that of Lipoprotein-releasing system ATP-binding protein LolD from Shigella flexneri.